The sequence spans 154 residues: C-type lectin 16 (154 aa).

The signal sequence occupies residues 1 to 20; the sequence is MALSLYLIAVICSLVGFTAS. Residues 27-152 form the C-type lectin domain; that stretch reads DNRFCFPNVV…CASMRRFVCE (126 aa). Disulfide bonds link C46-C151 and C123-C143.

In terms of assembly, (Microbial infection) Interacts with non-structural protein 1 of dengue virus type 2. Interacts with envelope protein E of dengue virus type 2. Female salivary gland (at protein level). Not detected in female carcass without salivary glands (at protein level). Not detected in male tissues (at protein level).

It localises to the secreted. Its function is as follows. Putative lectin. May have a regulatory role in mosquito immunity. Probably suppresses replication of dengue virus type 2 in mosquito salivary glands. This is C-type lectin 16 from Aedes aegypti (Yellowfever mosquito).